The sequence spans 91 residues: Small ribosomal subunit protein bS20 (91 aa).

Positions Met1–Asn21 are enriched in basic and acidic residues. Disordered regions lie at residues Met1–Lys25 and Pro70–Glu91. A compositionally biased stretch (basic residues) spans Pro70–Gln79.

This sequence belongs to the bacterial ribosomal protein bS20 family.

Binds directly to 16S ribosomal RNA. This chain is Small ribosomal subunit protein bS20, found in Chlorobium phaeobacteroides (strain BS1).